Reading from the N-terminus, the 342-residue chain is Uricase (342 aa).

Catalysis depends on charge relay system residues lysine 35 and threonine 80. Residues threonine 80, aspartate 81, phenylalanine 204, arginine 221, valine 269, glutamine 270, and asparagine 296 each contribute to the urate site. Histidine 298 (charge relay system) is an active-site residue. A Microbody targeting signal motif is present at residues 340-342 (SHL).

The protein belongs to the uricase family. Malpighian tubules.

It is found in the peroxisome. The enzyme catalyses urate + O2 + H2O = 5-hydroxyisourate + H2O2. It participates in purine metabolism; urate degradation; (S)-allantoin from urate: step 1/3. Its activity is regulated as follows. Repressed by 20-hydroxyecdysone. Its function is as follows. Catalyzes the oxidation of uric acid to 5-hydroxyisourate, which is further processed to form (S)-allantoin. This Drosophila virilis (Fruit fly) protein is Uricase (Uro).